A 612-amino-acid chain; its full sequence is UvrABC system protein C (612 aa).

The GIY-YIG domain maps to 20–98 (THSGVYRMLD…IKQHRPKYNI (79 aa)). Positions 208–243 (SSVLEEISAKMYQASEDMEYEKAQVYRDQLVILRKL) constitute a UVR domain.

This sequence belongs to the UvrC family. As to quaternary structure, interacts with UvrB in an incision complex.

It is found in the cytoplasm. The UvrABC repair system catalyzes the recognition and processing of DNA lesions. UvrC both incises the 5' and 3' sides of the lesion. The N-terminal half is responsible for the 3' incision and the C-terminal half is responsible for the 5' incision. The polypeptide is UvrABC system protein C (Francisella philomiragia subsp. philomiragia (strain ATCC 25017 / CCUG 19701 / FSC 153 / O#319-036)).